A 570-amino-acid chain; its full sequence is Dwarfin sma-4 (570 aa).

The interval 115–134 (SSQASSQPPPTPTVNPTPIP) is disordered. Positions 121–134 (QPPPTPTVNPTPIP) are enriched in pro residues. The region spanning 150-273 (QISHVLQCYQ…YERVVSNRIT (124 aa)) is the MH1 domain. Residues C203, C247, C258, and H263 each contribute to the Zn(2+) site. The 221-residue stretch at 350–570 (WCSIIYYELD…LKNSSQFGSS (221 aa)) folds into the MH2 domain.

This sequence belongs to the dwarfin/SMAD family.

The protein localises to the cytoplasm. It localises to the nucleus. Its function is as follows. Involved in TGF-beta pathway. In Caenorhabditis elegans, this protein is Dwarfin sma-4 (sma-4).